The following is a 287-amino-acid chain: Elongation factor Ts (287 aa).

Positions Thr80–Leu83 are involved in Mg(2+) ion dislocation from EF-Tu.

This sequence belongs to the EF-Ts family.

The protein localises to the cytoplasm. Its function is as follows. Associates with the EF-Tu.GDP complex and induces the exchange of GDP to GTP. It remains bound to the aminoacyl-tRNA.EF-Tu.GTP complex up to the GTP hydrolysis stage on the ribosome. This is Elongation factor Ts from Stutzerimonas stutzeri (strain A1501) (Pseudomonas stutzeri).